The chain runs to 427 residues: Beta-porphyranase D (427 aa).

A signal peptide spans 1–19 (MILKQAILTLVLVNANLFA). The disordered stretch occupies residues 23-45 (PKTYSSTDKETRQGPPKPPMGKR). Residues 32-308 (ETRQGPPKPP…WVRAYRLVDV (277 aa)) form the GH16 domain. Residues W73, R76, E168, E173, and E272 each coordinate substrate. The Nucleophile role is filled by E168. Residue E173 is the Proton donor of the active site.

This sequence belongs to the glycosyl hydrolase 16 family.

It is found in the periplasm. It carries out the reaction Hydrolysis of beta-D-galactopyranose-(1-&gt;4)-alpha-L-galactopyranose-6-sulfate linkages in porphyran.. In terms of biological role, cleaves the sulfated polysaccharide porphyran at the (1-&gt;4) linkages between beta-D-galactopyranose and alpha-L-galactopyranose-6-sulfate, forming mostly the disaccharide alpha-L-galactopyranose-6-sulfate-(1-&gt;3)-beta-D-galactose. This Zobellia galactanivorans (strain DSM 12802 / CCUG 47099 / CIP 106680 / NCIMB 13871 / Dsij) protein is Beta-porphyranase D (porD).